The following is a 449-amino-acid chain: 3-phosphoshikimate 1-carboxyvinyltransferase (449 aa).

Residues Lys28, Ser29, and Arg33 each contribute to the 3-phosphoshikimate site. Lys28 is a binding site for phosphoenolpyruvate. Residues Gly105 and Arg133 each coordinate phosphoenolpyruvate. 3-phosphoshikimate is bound by residues Ser179, Gln181, Asp332, and Lys359. Gln181 contacts phosphoenolpyruvate. The Proton acceptor role is filled by Asp332. Phosphoenolpyruvate-binding residues include Arg363 and Arg406.

Belongs to the EPSP synthase family. Monomer.

Its subcellular location is the cytoplasm. The enzyme catalyses 3-phosphoshikimate + phosphoenolpyruvate = 5-O-(1-carboxyvinyl)-3-phosphoshikimate + phosphate. Its pathway is metabolic intermediate biosynthesis; chorismate biosynthesis; chorismate from D-erythrose 4-phosphate and phosphoenolpyruvate: step 6/7. Functionally, catalyzes the transfer of the enolpyruvyl moiety of phosphoenolpyruvate (PEP) to the 5-hydroxyl of shikimate-3-phosphate (S3P) to produce enolpyruvyl shikimate-3-phosphate and inorganic phosphate. This Nitrobacter winogradskyi (strain ATCC 25391 / DSM 10237 / CIP 104748 / NCIMB 11846 / Nb-255) protein is 3-phosphoshikimate 1-carboxyvinyltransferase.